The primary structure comprises 69 residues: DNA gyrase inhibitor YacG (69 aa).

Residues C7, C10, C26, and C30 each coordinate Zn(2+).

The protein belongs to the DNA gyrase inhibitor YacG family. As to quaternary structure, interacts with GyrB. Zn(2+) serves as cofactor.

Its function is as follows. Inhibits all the catalytic activities of DNA gyrase by preventing its interaction with DNA. Acts by binding directly to the C-terminal domain of GyrB, which probably disrupts DNA binding by the gyrase. In Shewanella baltica (strain OS223), this protein is DNA gyrase inhibitor YacG.